A 385-amino-acid chain; its full sequence is Prepilin peptidase EppA (385 aa).

Helical transmembrane passes span 1–21 (MILMVIELLSVFIALLACFYA), 29–49 (GIIPNRLTFPVIGLGLLLNGA), 58–78 (WIFIYTAIFTAGIFALGYILW), 80–100 (MVAWAGGDVKLFTAVTSLLPF), 104–124 (LVSYSFLGTAFPVTASYPFPL), 126–146 (VIINSILALLPFLLVYVFFII), 166–186 (TSMVLALVITSAVTLTFLITD), 187–207 (FLPFQIIVLSLILVYLLTMVI), 231–251 (FELTVSGVVILWVSITVIQLI), and 358–378 (PAIFIGLLVSLLIGDLAMILF).

Belongs to the peptidase A24 family.

The protein localises to the cell membrane. Functionally, peptidase that processes the N-terminus of prepilins. This is Prepilin peptidase EppA from Methanothermobacter thermautotrophicus (strain ATCC 29096 / DSM 1053 / JCM 10044 / NBRC 100330 / Delta H) (Methanobacterium thermoautotrophicum).